The following is a 150-amino-acid chain: D-aminoacyl-tRNA deacylase (150 aa).

Positions 137–138 (GP) match the Gly-cisPro motif, important for rejection of L-amino acids motif.

The protein belongs to the DTD family. In terms of assembly, homodimer.

Its subcellular location is the cytoplasm. The enzyme catalyses glycyl-tRNA(Ala) + H2O = tRNA(Ala) + glycine + H(+). It carries out the reaction a D-aminoacyl-tRNA + H2O = a tRNA + a D-alpha-amino acid + H(+). An aminoacyl-tRNA editing enzyme that deacylates mischarged D-aminoacyl-tRNAs. Also deacylates mischarged glycyl-tRNA(Ala), protecting cells against glycine mischarging by AlaRS. Acts via tRNA-based rather than protein-based catalysis; rejects L-amino acids rather than detecting D-amino acids in the active site. By recycling D-aminoacyl-tRNA to D-amino acids and free tRNA molecules, this enzyme counteracts the toxicity associated with the formation of D-aminoacyl-tRNA entities in vivo and helps enforce protein L-homochirality. This Listeria innocua serovar 6a (strain ATCC BAA-680 / CLIP 11262) protein is D-aminoacyl-tRNA deacylase.